Consider the following 526-residue polypeptide: Exodeoxyribonuclease 7 large subunit (526 aa).

The tract at residues A497–F526 is disordered.

Belongs to the XseA family. As to quaternary structure, heterooligomer composed of large and small subunits.

It localises to the cytoplasm. It catalyses the reaction Exonucleolytic cleavage in either 5'- to 3'- or 3'- to 5'-direction to yield nucleoside 5'-phosphates.. Bidirectionally degrades single-stranded DNA into large acid-insoluble oligonucleotides, which are then degraded further into small acid-soluble oligonucleotides. This chain is Exodeoxyribonuclease 7 large subunit, found in Rhizobium johnstonii (strain DSM 114642 / LMG 32736 / 3841) (Rhizobium leguminosarum bv. viciae).